Reading from the N-terminus, the 260-residue chain is ProSAAS (260 aa).

An N-terminal signal peptide occupies residues 1-33 (MAGSPLLCGPRAGGVGLLVLLLLGLLRLPPTLS). A proSAAS(1-180) region spans residues 34–215 (ARPVKEPRSL…SSEPEAAPAP (182 aa)). Disordered stretches follow at residues 162–187 (AALR…ADET) and 206–234 (SSEP…PPEN). The C-terminal inhibitory domain; interacts with PCSK1 stretch occupies residues 221–260 (AVDQDLGPEVPPENVLGALLRVKRLENSSPQAPARRLLPP). The Sufficient for inhibition of PCSK1 signature appears at 239-244 (LLRVKR).

In terms of assembly, interacts via the C-terminal inhibitory domain with PCSK1 65 kDa form. Post-translationally, proteolytically cleaved in the Golgi. Big SAAS, Little SAAS, PEN and Big LEN are the major processed peptides in proSAAS-overexpressing PC-12 phaeochromocytoma cells (lacking PCSK1 and PCSK2 endopeptidases). Peptides corresponding to PEN and a proSAAS aa 40-59 have been detected in wild-type PC-12 cells. In terms of tissue distribution, expressed in adult brain (all major structural regions), adrenal gland (medulla) and spinal cord (dorsal and ventral horn). Expressed in pancreatic islands.

It is found in the secreted. The protein localises to the golgi apparatus. The protein resides in the trans-Golgi network. Functionally, may function in the control of the neuroendocrine secretory pathway. Proposed be a specific endogenous inhibitor of PCSK1. ProSAAS and Big PEN-LEN, both containing the C-terminal inhibitory domain, but not the processed peptides reduce PCSK1 activity in the endoplasmic reticulum and Golgi. It reduces the activity of the 87 kDa form but not the autocatalytically derived 65 kDa form of PCSK1. Subsequent processing of proSAAS may eliminate the inhibition. Slows down convertase-mediated processing of proopiomelanocortin and proenkephalin. May control the intracellular timing of PCSK1 rather than its total level of activity. Its function is as follows. Endogenous ligand for GPR171. Neuropeptide involved in the regulation of feeding. This chain is ProSAAS (Pcsk1n), found in Rattus norvegicus (Rat).